A 469-amino-acid polypeptide reads, in one-letter code: Calcium/calmodulin-dependent protein kinase type IV (469 aa).

A phosphoserine; by autocatalysis mark is found at S11 and S12. Residues 42-296 (FEVESELGRG…TFQALQHPWV (255 aa)) form the Protein kinase domain. ATP contacts are provided by residues 48-56 (LGRGATSIV) and K71. T53 carries O-linked (GlcNAc) threonine glycosylation. The O-linked (GlcNAc) serine glycan is linked to S54. S133 carries O-linked (GlcNAc) serine glycosylation. Catalysis depends on D160, which acts as the Proton acceptor. A glycan (O-linked (GlcNAc) serine) is linked at S185. At T196 the chain carries Phosphothreonine. Positions 297–336 (TGKAANFVHMDTAQKKLQEFNARRKLKAAVKAVVASSRLG) are autoinhibitory domain. Positions 302 to 319 (NFVHMDTAQKKLQEFNAR) are PP2A-binding. The segment at 318–337 (ARRKLKAAVKAVVASSRLGS) is calmodulin-binding. Position 332 is a phosphoserine; by autocatalysis (S332). Residues 336–469 (GSASSSHTSI…PQQDAIQPEY (134 aa)) are disordered. At S337 the chain carries Phosphoserine. S340, S341, and S352 each carry an O-linked (GlcNAc) serine glycan. The span at 360–374 (DAKDSTDLLGKKMQE) shows a compositional bias: basic and acidic residues. Acidic residues predominate over residues 375-388 (EDQEEDQVEAEASA). The span at 389-409 (DEMRKLQSEEVEKDAGVKEEE) shows a compositional bias: basic and acidic residues. Residues 417–426 (DPEDELETDD) are compositionally biased toward acidic residues. The span at 427–441 (PEMKRDSEEKLKSVE) shows a compositional bias: basic and acidic residues. 2 positions are modified to phosphoserine: S433 and S439. Positions 442 to 453 (EEMDPMTEEEAP) are enriched in acidic residues.

Belongs to the protein kinase superfamily. CAMK Ser/Thr protein kinase family. CaMK subfamily. As to quaternary structure, monomer. Interacts with protein phosphatase 2A (PPP2CA/PPP2CB); the interaction is mutually exclusive with binding to Ca(2+)/calmodulin. Phosphorylated by CaMKK1 and CaMKK2 on Thr-196. Dephosphorylated by protein phosphatase 2A. Autophosphorylated on Ser-11 and Ser-12. Post-translationally, glycosylation at Ser-185 modulates the phosphorylation of CaMK4 at Thr-196 and negatively regulates its activity toward CREB1 in basal conditions and during early inomycin stimulation. Expressed in brain and testis.

The protein localises to the cytoplasm. It is found in the nucleus. The enzyme catalyses L-seryl-[protein] + ATP = O-phospho-L-seryl-[protein] + ADP + H(+). The catalysed reaction is L-threonyl-[protein] + ATP = O-phospho-L-threonyl-[protein] + ADP + H(+). With respect to regulation, activated by Ca(2+)/calmodulin. Binding of calmodulin results in conformational change that relieves intrasteric autoinhibition and allows phosphorylation of Thr-196 within the activation loop by CaMKK1 or CaMKK2. Phosphorylation of Thr-196 results in a 10-20-fold increase in total activity to generate Ca(2+)/calmodulin-independent activity. Autophosphorylation of the N-terminus Ser-11 and Ser-12 is required for full activation. Inactivated by protein phosphatase 2A (PPP2CA/PPP2CB) which dephosphorylates Thr-196, thereby terminating autonomous activity and helping to maintain the enzyme in its autoinhibited state. Functionally, calcium/calmodulin-dependent protein kinase that operates in the calcium-triggered CaMKK-CaMK4 signaling cascade and regulates, mainly by phosphorylation, the activity of several transcription activators, such as CREB1, MEF2D, JUN and RORA, which play pivotal roles in immune response, inflammation, and memory consolidation. In the thymus, regulates the CD4(+)/CD8(+) double positive thymocytes selection threshold during T-cell ontogeny. In CD4 memory T-cells, is required to link T-cell antigen receptor (TCR) signaling to the production of IL2, IFNG and IL4 (through the regulation of CREB and MEF2). Regulates the differentiation and survival phases of osteoclasts and dendritic cells (DCs). Mediates DCs survival by linking TLR4 and the regulation of temporal expression of BCL2. Phosphorylates the transcription activator CREB1 on 'Ser-133' in hippocampal neuron nuclei and contribute to memory consolidation and long term potentiation (LTP) in the hippocampus. Can activate the MAP kinases MAPK1/ERK2, MAPK8/JNK1 and MAPK14/p38 and stimulate transcription through the phosphorylation of ELK1 and ATF2. Can also phosphorylate in vitro CREBBP, PRM2, MEF2A and STMN1/OP18. May be involved in spermatogenesis. This chain is Calcium/calmodulin-dependent protein kinase type IV (Camk4), found in Mus musculus (Mouse).